The sequence spans 203 residues: V-type ATP synthase subunit D (203 aa).

It belongs to the V-ATPase D subunit family.

Its function is as follows. Produces ATP from ADP in the presence of a proton gradient across the membrane. This chain is V-type ATP synthase subunit D (atpD), found in Chlamydia muridarum (strain MoPn / Nigg).